Consider the following 926-residue polypeptide: Alanine--tRNA ligase (926 aa).

Zn(2+) is bound by residues histidine 611, histidine 615, cysteine 714, and histidine 718.

The protein belongs to the class-II aminoacyl-tRNA synthetase family. Requires Zn(2+) as cofactor.

It localises to the cytoplasm. It catalyses the reaction tRNA(Ala) + L-alanine + ATP = L-alanyl-tRNA(Ala) + AMP + diphosphate. In terms of biological role, catalyzes the attachment of alanine to tRNA(Ala) in a two-step reaction: alanine is first activated by ATP to form Ala-AMP and then transferred to the acceptor end of tRNA(Ala). Also edits incorrectly charged Ser-tRNA(Ala) and Gly-tRNA(Ala) via its editing domain. The chain is Alanine--tRNA ligase from Methanosarcina mazei (strain ATCC BAA-159 / DSM 3647 / Goe1 / Go1 / JCM 11833 / OCM 88) (Methanosarcina frisia).